The primary structure comprises 123 residues: Cytochrome c-555 (123 aa).

The first 27 residues, methionine 1–serine 27, serve as a signal peptide directing secretion. Heme c contacts are provided by cysteine 46, cysteine 49, histidine 50, and methionine 86.

In terms of processing, binds 1 heme c group covalently per subunit.

This is Cytochrome c-555 from Methylococcus capsulatus (strain ATCC 33009 / NCIMB 11132 / Bath).